We begin with the raw amino-acid sequence, 1091 residues long: Exonuclease/helicase subunit RexB (1091 aa).

It belongs to the helicase family. AddB/RexB type 2 subfamily. Heterodimer of RexA (AddA) and RexB. It depends on Mg(2+) as a cofactor.

Involved in DNA double-strand break repair. Is not involved in recombination during natural competence or in plasmid establishment. Functionally, the heterodimer acts as both an ATP-dependent DNA helicase and an ATP-dependent, dual-direction single-stranded exonuclease. Recognizes the chi site generating a DNA molecule suitable for the initiation of homologous recombination. This subunit has 5' -&gt; 3' nuclease activity but not helicase activity. This Streptococcus pneumoniae serotype 4 (strain ATCC BAA-334 / TIGR4) protein is Exonuclease/helicase subunit RexB.